A 325-amino-acid polypeptide reads, in one-letter code: Glutarate 2-hydroxylase (325 aa).

Fe cation is bound by residues histidine 160, aspartate 162, and histidine 292.

This sequence belongs to the glutarate hydroxylase family. As to quaternary structure, homotetramer. Fe(2+) serves as cofactor.

It catalyses the reaction glutarate + 2-oxoglutarate + O2 = (S)-2-hydroxyglutarate + succinate + CO2. It participates in amino-acid degradation. Its function is as follows. Acts as an alpha-ketoglutarate-dependent dioxygenase catalyzing hydroxylation of glutarate (GA) to L-2-hydroxyglutarate (L2HG). Functions in a L-lysine degradation pathway that proceeds via cadaverine, glutarate and L-2-hydroxyglutarate. This chain is Glutarate 2-hydroxylase, found in Escherichia coli (strain K12 / MC4100 / BW2952).